A 428-amino-acid chain; its full sequence is UDP-N-acetylglucosamine 1-carboxyvinyltransferase 2 (428 aa).

A phosphoenolpyruvate-binding site is contributed by 22-23; sequence KN. Arginine 92 provides a ligand contact to UDP-N-acetyl-alpha-D-glucosamine. The active-site Proton donor is the cysteine 116. Position 116 is a 2-(S-cysteinyl)pyruvic acid O-phosphothioketal (cysteine 116). UDP-N-acetyl-alpha-D-glucosamine-binding positions include 121–125, aspartate 304, and isoleucine 326; that span reads RPIDQ.

This sequence belongs to the EPSP synthase family. MurA subfamily.

It is found in the cytoplasm. It carries out the reaction phosphoenolpyruvate + UDP-N-acetyl-alpha-D-glucosamine = UDP-N-acetyl-3-O-(1-carboxyvinyl)-alpha-D-glucosamine + phosphate. Its pathway is cell wall biogenesis; peptidoglycan biosynthesis. Cell wall formation. Adds enolpyruvyl to UDP-N-acetylglucosamine. The chain is UDP-N-acetylglucosamine 1-carboxyvinyltransferase 2 from Geobacillus kaustophilus (strain HTA426).